The following is a 360-amino-acid chain: Peptide chain release factor 1 (360 aa).

At Gln235 the chain carries N5-methylglutamine. A disordered region spans residues 284–304 (KVDSERSADRKSQVGSGDRSE).

This sequence belongs to the prokaryotic/mitochondrial release factor family. In terms of processing, methylated by PrmC. Methylation increases the termination efficiency of RF1.

Its subcellular location is the cytoplasm. Its function is as follows. Peptide chain release factor 1 directs the termination of translation in response to the peptide chain termination codons UAG and UAA. The protein is Peptide chain release factor 1 of Agrobacterium fabrum (strain C58 / ATCC 33970) (Agrobacterium tumefaciens (strain C58)).